Here is a 378-residue protein sequence, read N- to C-terminus: Tetraacyldisaccharide 4'-kinase (378 aa).

63 to 70 serves as a coordination point for ATP; that stretch reads AVGGAGKT.

It belongs to the LpxK family.

The enzyme catalyses a lipid A disaccharide + ATP = a lipid IVA + ADP + H(+). The protein operates within glycolipid biosynthesis; lipid IV(A) biosynthesis; lipid IV(A) from (3R)-3-hydroxytetradecanoyl-[acyl-carrier-protein] and UDP-N-acetyl-alpha-D-glucosamine: step 6/6. In terms of biological role, transfers the gamma-phosphate of ATP to the 4'-position of a tetraacyldisaccharide 1-phosphate intermediate (termed DS-1-P) to form tetraacyldisaccharide 1,4'-bis-phosphate (lipid IVA). The sequence is that of Tetraacyldisaccharide 4'-kinase from Anaeromyxobacter dehalogenans (strain 2CP-C).